The following is a 542-amino-acid chain: Chaperonin GroEL 2 (542 aa).

Residues 30-33 (TLGP), Lys-51, 87-91 (DGTTT), Gly-415, and Asp-496 each bind ATP.

It belongs to the chaperonin (HSP60) family. Forms a cylinder of 14 subunits composed of two heptameric rings stacked back-to-back. Interacts with the co-chaperonin GroES.

It localises to the cytoplasm. It catalyses the reaction ATP + H2O + a folded polypeptide = ADP + phosphate + an unfolded polypeptide.. Together with its co-chaperonin GroES, plays an essential role in assisting protein folding. The GroEL-GroES system forms a nano-cage that allows encapsulation of the non-native substrate proteins and provides a physical environment optimized to promote and accelerate protein folding. In Mesorhizobium japonicum (strain LMG 29417 / CECT 9101 / MAFF 303099) (Mesorhizobium loti (strain MAFF 303099)), this protein is Chaperonin GroEL 2.